Here is a 126-residue protein sequence, read N- to C-terminus: Flagellar protein FliT (126 aa).

Residues 1–50 form a required for homodimerization region; sequence MASPHRLLKDYQQLLSLSQKILHLAVNGQWDTLVEQEIVYVQSVEGLVNT. Residues 60–98 are fliD binding; it reads MRLHLRQILQEVMDNEAKVKQLLQKRMDELSSLMGQSLK.

This sequence belongs to the FliT family. As to quaternary structure, homodimer. Interacts with FliD and FlhC.

The protein localises to the cytoplasm. The protein resides in the cytosol. In terms of biological role, dual-function protein that regulates the transcription of class 2 flagellar operons and that also acts as an export chaperone for the filament-capping protein FliD. As a transcriptional regulator, acts as an anti-FlhDC factor; it directly binds FlhC, thus inhibiting the binding of the FlhC/FlhD complex to class 2 promoters, resulting in decreased expression of class 2 flagellar operons. As a chaperone, effects FliD transition to the membrane by preventing its premature polymerization, and by directing it to the export apparatus. This Pectobacterium carotovorum subsp. carotovorum (strain PC1) protein is Flagellar protein FliT.